The sequence spans 273 residues: Putative pyruvate, phosphate dikinase regulatory protein (273 aa).

Residue 149–156 coordinates ADP; it reads GPSRTSKT.

This sequence belongs to the pyruvate, phosphate/water dikinase regulatory protein family. PDRP subfamily.

The enzyme catalyses N(tele)-phospho-L-histidyl/L-threonyl-[pyruvate, phosphate dikinase] + ADP = N(tele)-phospho-L-histidyl/O-phospho-L-threonyl-[pyruvate, phosphate dikinase] + AMP + H(+). The catalysed reaction is N(tele)-phospho-L-histidyl/O-phospho-L-threonyl-[pyruvate, phosphate dikinase] + phosphate + H(+) = N(tele)-phospho-L-histidyl/L-threonyl-[pyruvate, phosphate dikinase] + diphosphate. Its function is as follows. Bifunctional serine/threonine kinase and phosphorylase involved in the regulation of the pyruvate, phosphate dikinase (PPDK) by catalyzing its phosphorylation/dephosphorylation. The sequence is that of Putative pyruvate, phosphate dikinase regulatory protein from Rickettsia prowazekii (strain Madrid E).